The primary structure comprises 535 residues: MTASSKPSASASDSSADGTSAHDKILIVDFGSQVTQLIARRVREEGVYSEIVPFQKAEAAFLAMKPKAVILSGGPASVLDRAAPAAPMAIFTAGVPVLGICYGEQTMAQQLGGTVEAGHHREFGRAAIEVIDACALFDGVWEKGGTYDVWMSHGDRVTKLPDGFRAVAKAPGSPIAVIADDARRFYAMQFHPEVVHTPDGAKLIRNFVRKVAGLTGDWTMRAFREEAVEKIRTQVGKGRVICGLSGGVDSSVAAILIHEAIGDQLTCVFVDHGMLRKDEGKTVVDLFRHHYNIPLIHVDASKKFLSELAGVTDPEAKRKTIGRLFIDVFEAEAKKIGGADFLAQGTLYPDVIESVSFTGGPSVTIKSHHNVGGLPDRMNMKLVEPLRELFKDEVRALGRELGLPEIFVGRHPFPGPGLAIRCPGEITNEKLDILREADAVYIDEIRKAGLYDNIWQAFAVLLPVKTVGVMGDSRTYDYVVGLRAVTSTDGMTADFYPFDAQFLGSTSTRIINEVKGVNRVVYDVTSKPPGTIEWE.

Residues 24 to 217 enclose the Glutamine amidotransferase type-1 domain; that stretch reads KILIVDFGSQ…VRKVAGLTGD (194 aa). Cys-101 acts as the Nucleophile in catalysis. Active-site residues include His-191 and Glu-193. Residues 218–410 form the GMPS ATP-PPase domain; that stretch reads WTMRAFREEA…LGLPEIFVGR (193 aa). An ATP-binding site is contributed by 245 to 251; the sequence is SGGVDSS.

In terms of assembly, homodimer.

It catalyses the reaction XMP + L-glutamine + ATP + H2O = GMP + L-glutamate + AMP + diphosphate + 2 H(+). It functions in the pathway purine metabolism; GMP biosynthesis; GMP from XMP (L-Gln route): step 1/1. Functionally, catalyzes the synthesis of GMP from XMP. The protein is GMP synthase [glutamine-hydrolyzing] of Nitrobacter winogradskyi (strain ATCC 25391 / DSM 10237 / CIP 104748 / NCIMB 11846 / Nb-255).